The following is a 722-amino-acid chain: Polymerase basic protein 2 (722 aa).

As to quaternary structure, the RNA polymerase is composed of three subunits: PB1, PB2 and PA.

Its subcellular location is the virion. The protein localises to the host nucleus. Involved in transcription initiation and cap-stealing mechanism, in which cellular capped pre-mRNA are used to generate primers for viral transcription. Binds the cap of the target pre-RNA which is subsequently cleaved by PB1. May play a role in genome replication. This is Polymerase basic protein 2 from Gadus morhua (Atlantic cod).